A 250-amino-acid polypeptide reads, in one-letter code: Acetylglutamate kinase (250 aa).

Substrate is bound by residues 41–42, Arg63, and Asn156; that span reads GG.

This sequence belongs to the acetylglutamate kinase family. ArgB subfamily.

The protein resides in the cytoplasm. It catalyses the reaction N-acetyl-L-glutamate + ATP = N-acetyl-L-glutamyl 5-phosphate + ADP. It participates in amino-acid biosynthesis; L-arginine biosynthesis; N(2)-acetyl-L-ornithine from L-glutamate: step 2/4. Functionally, catalyzes the ATP-dependent phosphorylation of N-acetyl-L-glutamate. In Listeria monocytogenes serovar 1/2a (strain ATCC BAA-679 / EGD-e), this protein is Acetylglutamate kinase.